The chain runs to 714 residues: Fatty acid oxidation complex subunit alpha (714 aa).

Residues Met-1–Pro-190 are enoyl-CoA hydratase. The segment at Gly-306 to His-714 is 3-hydroxyacyl-CoA dehydrogenase.

In the N-terminal section; belongs to the enoyl-CoA hydratase/isomerase family. It in the central section; belongs to the 3-hydroxyacyl-CoA dehydrogenase family. As to quaternary structure, heterotetramer of two alpha chains (FadJ) and two beta chains (FadI).

It is found in the cytoplasm. It carries out the reaction a (3S)-3-hydroxyacyl-CoA = a (2E)-enoyl-CoA + H2O. It catalyses the reaction a 4-saturated-(3S)-3-hydroxyacyl-CoA = a (3E)-enoyl-CoA + H2O. The catalysed reaction is a (3S)-3-hydroxyacyl-CoA + NAD(+) = a 3-oxoacyl-CoA + NADH + H(+). The enzyme catalyses (3S)-3-hydroxybutanoyl-CoA = (3R)-3-hydroxybutanoyl-CoA. It functions in the pathway lipid metabolism; fatty acid beta-oxidation. In terms of biological role, catalyzes the formation of a hydroxyacyl-CoA by addition of water on enoyl-CoA. Also exhibits 3-hydroxyacyl-CoA epimerase and 3-hydroxyacyl-CoA dehydrogenase activities. The sequence is that of Fatty acid oxidation complex subunit alpha from Escherichia fergusonii (strain ATCC 35469 / DSM 13698 / CCUG 18766 / IAM 14443 / JCM 21226 / LMG 7866 / NBRC 102419 / NCTC 12128 / CDC 0568-73).